The chain runs to 480 residues: Iroquois-class homeodomain protein IRX-1 (480 aa).

Residues 125-188 constitute a DNA-binding region (homeobox; TALE-type); the sequence is YGDPGRPKNA…ANARRRLKKE (64 aa). Disordered regions lie at residues 190 to 268, 280 to 354, and 401 to 480; these read KVTW…QGSP, SPLG…PLQH, and PHGP…LPSA. The span at 210–228 shows a compositional bias: acidic residues; sequence TEGDPEKAEDDEEIDLESI. The span at 229–239 shows a compositional bias: basic and acidic residues; the sequence is DIDKIDEHDGD. Residue S241 is modified to Phosphoserine. 2 stretches are compositionally biased toward low complexity: residues 252–262 and 340–351; these read PHAPAAPSALA and HPGAHGPSAGAP. Over residues 404-417 the composition is skewed to pro residues; the sequence is PHLPAPPPPQPPVA.

Belongs to the TALE/IRO homeobox family.

It is found in the nucleus. This is Iroquois-class homeodomain protein IRX-1 (IRX1) from Homo sapiens (Human).